The sequence spans 200 residues: Glycerol-3-phosphate acyltransferase (200 aa).

The next 5 helical transmembrane spans lie at 2-22 (FNIPAVAVSYLIGSLSFAVIV), 51-71 (KAAALTLLGDAAKGLVAVLLA), 84-104 (AIAAVALAALVGHMWPVFFGF), 114-134 (LGVLLALSPATALVCALIWLV), and 159-179 (FFMPHVSWVWATVAIALLVLF).

It belongs to the PlsY family. Probably interacts with PlsX.

The protein localises to the cell inner membrane. The catalysed reaction is an acyl phosphate + sn-glycerol 3-phosphate = a 1-acyl-sn-glycero-3-phosphate + phosphate. The protein operates within lipid metabolism; phospholipid metabolism. Catalyzes the transfer of an acyl group from acyl-phosphate (acyl-PO(4)) to glycerol-3-phosphate (G3P) to form lysophosphatidic acid (LPA). This enzyme utilizes acyl-phosphate as fatty acyl donor, but not acyl-CoA or acyl-ACP. This is Glycerol-3-phosphate acyltransferase from Neisseria meningitidis serogroup B (strain ATCC BAA-335 / MC58).